A 2184-amino-acid polypeptide reads, in one-letter code: Chromodomain-helicase-DNA-binding protein 8 (2184 aa).

Disordered regions lie at residues 379–399 (VKTSTGGGESRKLDSQKKQEK) and 419–527 (IPRV…KRKK). A compositionally biased stretch (basic and acidic residues) spans 387–399 (ESRKLDSQKKQEK). The span at 425–437 (EDELPSVNPEDDD) shows a compositional bias: acidic residues. The segment covering 448 to 459 (GETSDRSKDEKP) has biased composition (basic and acidic residues). The span at 516-527 (KRRSNRQVKRKK) shows a compositional bias: basic residues. Chromo domains lie at 586-653 (AIVD…TQMQ) and 668-734 (VEVD…RVAR). The region spanning 767-941 (LFNWYNRQNC…FSLLHFLEPT (175 aa)) is the Helicase ATP-binding domain. ATP is bound at residue 780–787 (DEMGLGKT). The DEAH box signature appears at 892–895 (DEAH). One can recognise a Helicase C-terminal domain in the interval 1081-1252 (LIDKLLPKLR…FTKKEIEDLL (172 aa)). 2 disordered regions span residues 1907–1989 (GISG…EESR) and 2039–2076 (WSSPRRLSDPPSDSPDSLPPTPEQQSPAHFTQIRPAPD). Low complexity-rich tracts occupy residues 1912-1961 (SRPS…SNSE) and 2040-2054 (SSPRRLSDPPSDSPD).

It belongs to the SNF2/RAD54 helicase family. CHD8 subfamily. As to quaternary structure, component of some MLL1/MLL complex.

Its subcellular location is the nucleus. It catalyses the reaction ATP + H2O = ADP + phosphate + H(+). In terms of biological role, ATP-dependent chromatin-remodeling factor, it slides nucleosomes along DNA; nucleosome sliding requires ATP. Acts as a transcription repressor by remodeling chromatin structure and recruiting histone H1 to target genes. Suppresses p53/tp53-mediated apoptosis by recruiting histone H1 and preventing p53/tp53 transactivation activity. Acts as a negative regulator of Wnt signaling pathway by regulating beta-catenin (ctnnb1) activity. Negatively regulates ctnnb1-targeted gene expression by being recruited specifically to the promoter regions of several ctnnb1 responsive genes. May also act as a transcription activator by participating in efficient U6 RNA polymerase III transcription. This chain is Chromodomain-helicase-DNA-binding protein 8, found in Xenopus tropicalis (Western clawed frog).